Reading from the N-terminus, the 525-residue chain is Probable protein kinase UbiB (525 aa).

In terms of domain architecture, Protein kinase spans 118–500; sequence DFERVPVASA…QKRTNRLLQG (383 aa). ATP contacts are provided by residues 124-132 and K150; that span reads VASASIAQV. D285 acts as the Proton acceptor in catalysis. The chain crosses the membrane as a helical span at residues 501–521; sequence LLLFGVAVGVGAALARVFLAL.

Belongs to the ABC1 family. UbiB subfamily.

The protein resides in the cell inner membrane. It functions in the pathway cofactor biosynthesis; ubiquinone biosynthesis [regulation]. Its function is as follows. Is probably a protein kinase regulator of UbiI activity which is involved in aerobic coenzyme Q (ubiquinone) biosynthesis. The protein is Probable protein kinase UbiB of Paraburkholderia xenovorans (strain LB400).